Consider the following 523-residue polypeptide: Type 2 DNA topoisomerase 6 subunit B (523 aa).

ATP contacts are provided by residues N48, D80, 101-102 (SK), 110-117 (GQQGLGCS), and K436.

It belongs to the TOP6B family. Homodimer. Heterotetramer of two Top6A and two Top6B chains.

The enzyme catalyses ATP-dependent breakage, passage and rejoining of double-stranded DNA.. Its function is as follows. Relaxes both positive and negative superturns and exhibits a strong decatenase activity. This chain is Type 2 DNA topoisomerase 6 subunit B, found in Methanothermobacter thermautotrophicus (strain ATCC 29096 / DSM 1053 / JCM 10044 / NBRC 100330 / Delta H) (Methanobacterium thermoautotrophicum).